We begin with the raw amino-acid sequence, 396 residues long: Mannonate dehydratase (396 aa).

The protein belongs to the mannonate dehydratase family. It depends on Fe(2+) as a cofactor. The cofactor is Mn(2+).

The catalysed reaction is D-mannonate = 2-dehydro-3-deoxy-D-gluconate + H2O. The protein operates within carbohydrate metabolism; pentose and glucuronate interconversion. Catalyzes the dehydration of D-mannonate. In Serratia proteamaculans (strain 568), this protein is Mannonate dehydratase.